The primary structure comprises 156 residues: Lipoprotein signal peptidase (156 aa).

The next 2 membrane-spanning stretches (helical) occupy residues 57 to 77 (LFLI…LFIN) and 83 to 103 (ILKI…IDRI). Catalysis depends on residues D110 and D129. A helical membrane pass occupies residues 124–144 (IFNIADVLVSLGTILLIIFII).

It belongs to the peptidase A8 family.

The protein localises to the cell membrane. The catalysed reaction is Release of signal peptides from bacterial membrane prolipoproteins. Hydrolyzes -Xaa-Yaa-Zaa-|-(S,diacylglyceryl)Cys-, in which Xaa is hydrophobic (preferably Leu), and Yaa (Ala or Ser) and Zaa (Gly or Ala) have small, neutral side chains.. The protein operates within protein modification; lipoprotein biosynthesis (signal peptide cleavage). In terms of biological role, this protein specifically catalyzes the removal of signal peptides from prolipoproteins. This Clostridium tetani (strain Massachusetts / E88) protein is Lipoprotein signal peptidase.